The sequence spans 613 residues: Probable inactive purple acid phosphatase 1 (613 aa).

The N-terminal stretch at 1–24 (MRESLVAILVTVISVLGAIHQVKS) is a signal peptide. 2 N-linked (GlcNAc...) asparagine glycosylation sites follow: asparagine 89 and asparagine 116. Aspartate 295 provides a ligand contact to Fe cation. Residue asparagine 316 is glycosylated (N-linked (GlcNAc...) asparagine). The Fe cation site is built by aspartate 336 and tyrosine 339. Aspartate 336 provides a ligand contact to Zn(2+). The Zn(2+) site is built by asparagine 369, histidine 458, and histidine 500. Asparagine 369 lines the substrate pocket. 500 to 502 (HAH) contributes to the substrate binding site. Residue histidine 502 participates in Fe cation binding. Residues asparagine 528 and asparagine 551 are each glycosylated (N-linked (GlcNAc...) asparagine).

This sequence belongs to the metallophosphoesterase superfamily. Purple acid phosphatase family. Homodimer. The cofactor is Fe cation. Zn(2+) is required as a cofactor. Expressed in roots, stems, leaves, flowers and siliques.

It localises to the secreted. This Arabidopsis thaliana (Mouse-ear cress) protein is Probable inactive purple acid phosphatase 1 (PAP1).